The following is a 169-amino-acid chain: Phosphopantetheine adenylyltransferase (169 aa).

Thr14 contributes to the substrate binding site. Residues 14–15 and His22 each bind ATP; that span reads TF. Substrate-binding residues include Lys46, Leu78, and Arg92. Residues 93-95, Glu103, and 128-134 each bind ATP; these read GLR and HSFISSS.

Belongs to the bacterial CoaD family. As to quaternary structure, homohexamer. The cofactor is Mg(2+).

It is found in the cytoplasm. It catalyses the reaction (R)-4'-phosphopantetheine + ATP + H(+) = 3'-dephospho-CoA + diphosphate. Its pathway is cofactor biosynthesis; coenzyme A biosynthesis; CoA from (R)-pantothenate: step 4/5. In terms of biological role, reversibly transfers an adenylyl group from ATP to 4'-phosphopantetheine, yielding dephospho-CoA (dPCoA) and pyrophosphate. This Stenotrophomonas maltophilia (strain R551-3) protein is Phosphopantetheine adenylyltransferase.